Consider the following 178-residue polypeptide: Lipid A deacylase PagL (178 aa).

Positions 1–19 (MQFLKKNKPLFGIVTLALA) are cleaved as a signal peptide. Active-site charge relay system residues include histidine 154, serine 156, and aspartate 168.

Belongs to the PagL family. In terms of assembly, homodimer.

It is found in the cell outer membrane. The catalysed reaction is a 3-(acyloxy)acyl derivative of bacterial toxin + H2O = a 3-hydroxyacyl derivative of bacterial toxin + a fatty acid + H(+). Its function is as follows. Has lipid A 3-O-deacylase activity. Hydrolyzes the ester bond at the 3 position of lipid A, a bioactive component of lipopolysaccharide (LPS), thereby releasing the primary fatty acyl moiety. The polypeptide is Lipid A deacylase PagL (Bordetella bronchiseptica (strain ATCC BAA-588 / NCTC 13252 / RB50) (Alcaligenes bronchisepticus)).